The primary structure comprises 132 residues: Small ribosomal subunit protein uS8 (132 aa).

It belongs to the universal ribosomal protein uS8 family. As to quaternary structure, part of the 30S ribosomal subunit. Contacts proteins S5 and S12.

One of the primary rRNA binding proteins, it binds directly to 16S rRNA central domain where it helps coordinate assembly of the platform of the 30S subunit. The chain is Small ribosomal subunit protein uS8 from Xylella fastidiosa (strain M23).